The following is a 122-amino-acid chain: Large ribosomal subunit protein bL12 (122 aa).

This sequence belongs to the bacterial ribosomal protein bL12 family. Homodimer. Part of the ribosomal stalk of the 50S ribosomal subunit. Forms a multimeric L10(L12)X complex, where L10 forms an elongated spine to which 2 to 4 L12 dimers bind in a sequential fashion. Binds GTP-bound translation factors.

Forms part of the ribosomal stalk which helps the ribosome interact with GTP-bound translation factors. Is thus essential for accurate translation. This is Large ribosomal subunit protein bL12 from Cellvibrio japonicus (strain Ueda107) (Pseudomonas fluorescens subsp. cellulosa).